Consider the following 73-residue polypeptide: MIMRMTLTLFVLVVMTAASASGDALTEAKRIPYCGQTGAECYSWCIKQDLSKDWCCDFVKTIARLPPAHICSQ.

The signal sequence occupies residues methionine 1–glycine 22. A propeptide spanning residues aspartate 23 to alanine 28 is cleaved from the precursor. Cystine bridges form between cysteine 34/cysteine 41, cysteine 45/cysteine 55, and cysteine 56/cysteine 71.

Belongs to the conotoxin K superfamily. Expressed by the venom duct.

The protein localises to the secreted. Its function is as follows. Neurotoxin that induces excitatory symptoms in mice following intracranial administration. No symptoms are observed after intraperitoneal and intravenous (tail vein) injections. The sequence is that of Conotoxin im23b from Conus imperialis (Imperial cone).